Here is a 195-residue protein sequence, read N- to C-terminus: Coiled-coil domain-containing protein 184 (195 aa).

A coiled-coil region spans residues 39 to 68; it reads GMKELMEHLKAQLQALFEDVRAMRGALDEQ. The segment at 98 to 175 is disordered; the sequence is RQGGLGVVGN…AGLLGGDGPL (78 aa). The segment covering 135–146 has biased composition (acidic residues); the sequence is PEDEEDDDEEEK.

The sequence is that of Coiled-coil domain-containing protein 184 (CCDC184) from Bos taurus (Bovine).